Here is a 379-residue protein sequence, read N- to C-terminus: MPAVTYEHIKTCKQSGARLGIVHTPHGSFETPMFMPVGTKATVKTMSPEELRNIEAKIILGNTYHLWLQPGNDIIKHAGGLHKFMNWDGPILTDSGGFQVFSLSNLRKISEEGVEFRHHTNGSKLFLSPEKSMQIQNDLGSDIMMAFDECPPMPAEYDYVKDSIERTTRWAARCLKAHQRPGDQALFGIIQGGEYKDLREQSAKELVSLDFPGYAIGGLSVGEPKPVMYDMVEHTEQFMPKDKPRYLMGVGSPDALIECSIRGMDMFDCVLPTRIARNGTCMTSNGRLVVKNAKYADDLRPLDEQCDCYTCQHYTRAYIRHLVKAEETFGIRLTTIHNLHFLLKLMEDIRQAIREDRLLDFKDEFFEQYGLNVENPKNF.

D94 functions as the Proton acceptor in the catalytic mechanism. Substrate contacts are provided by residues 94–98, D148, Q191, and G218; that span reads DSGGF. The RNA binding stretch occupies residues 249 to 255; the sequence is GVGSPDA. The Nucleophile role is filled by D268. Residues 273-277 are RNA binding; important for wobble base 34 recognition; sequence TRIAR. Zn(2+) contacts are provided by C306, C308, C311, and H337.

Belongs to the queuine tRNA-ribosyltransferase family. As to quaternary structure, homodimer. Within each dimer, one monomer is responsible for RNA recognition and catalysis, while the other monomer binds to the replacement base PreQ1. It depends on Zn(2+) as a cofactor.

The catalysed reaction is 7-aminomethyl-7-carbaguanine + guanosine(34) in tRNA = 7-aminomethyl-7-carbaguanosine(34) in tRNA + guanine. The protein operates within tRNA modification; tRNA-queuosine biosynthesis. Its function is as follows. Catalyzes the base-exchange of a guanine (G) residue with the queuine precursor 7-aminomethyl-7-deazaguanine (PreQ1) at position 34 (anticodon wobble position) in tRNAs with GU(N) anticodons (tRNA-Asp, -Asn, -His and -Tyr). Catalysis occurs through a double-displacement mechanism. The nucleophile active site attacks the C1' of nucleotide 34 to detach the guanine base from the RNA, forming a covalent enzyme-RNA intermediate. The proton acceptor active site deprotonates the incoming PreQ1, allowing a nucleophilic attack on the C1' of the ribose to form the product. After dissociation, two additional enzymatic reactions on the tRNA convert PreQ1 to queuine (Q), resulting in the hypermodified nucleoside queuosine (7-(((4,5-cis-dihydroxy-2-cyclopenten-1-yl)amino)methyl)-7-deazaguanosine). The chain is Queuine tRNA-ribosyltransferase from Staphylococcus epidermidis (strain ATCC 35984 / DSM 28319 / BCRC 17069 / CCUG 31568 / BM 3577 / RP62A).